Here is a 238-residue protein sequence, read N- to C-terminus: Orotidine 5'-phosphate decarboxylase (238 aa).

Substrate-binding positions include Asp-11, Lys-32, 59–68 (DLKFHDIPNT), Thr-123, Arg-185, Gln-194, Gly-214, and Arg-215. Catalysis depends on Lys-61, which acts as the Proton donor.

The protein belongs to the OMP decarboxylase family. Type 1 subfamily. As to quaternary structure, homodimer.

The enzyme catalyses orotidine 5'-phosphate + H(+) = UMP + CO2. It participates in pyrimidine metabolism; UMP biosynthesis via de novo pathway; UMP from orotate: step 2/2. Functionally, catalyzes the decarboxylation of orotidine 5'-monophosphate (OMP) to uridine 5'-monophosphate (UMP). This is Orotidine 5'-phosphate decarboxylase from Nostoc sp. (strain PCC 7120 / SAG 25.82 / UTEX 2576).